The primary structure comprises 259 residues: Imidazole glycerol phosphate synthase subunit HisF (259 aa).

Catalysis depends on residues D11 and D130.

It belongs to the HisA/HisF family. In terms of assembly, heterodimer of HisH and HisF.

It localises to the cytoplasm. It catalyses the reaction 5-[(5-phospho-1-deoxy-D-ribulos-1-ylimino)methylamino]-1-(5-phospho-beta-D-ribosyl)imidazole-4-carboxamide + L-glutamine = D-erythro-1-(imidazol-4-yl)glycerol 3-phosphate + 5-amino-1-(5-phospho-beta-D-ribosyl)imidazole-4-carboxamide + L-glutamate + H(+). It participates in amino-acid biosynthesis; L-histidine biosynthesis; L-histidine from 5-phospho-alpha-D-ribose 1-diphosphate: step 5/9. Its function is as follows. IGPS catalyzes the conversion of PRFAR and glutamine to IGP, AICAR and glutamate. The HisF subunit catalyzes the cyclization activity that produces IGP and AICAR from PRFAR using the ammonia provided by the HisH subunit. This chain is Imidazole glycerol phosphate synthase subunit HisF, found in Desulfovibrio desulfuricans (strain ATCC 27774 / DSM 6949 / MB).